The chain runs to 341 residues: Glycerol-3-phosphate dehydrogenase [NAD(P)+] (341 aa).

Positions 17, 18, 37, and 112 each coordinate NADPH. Residues Lys112 and Gly140 each contribute to the sn-glycerol 3-phosphate site. Ala144 is an NADPH binding site. The sn-glycerol 3-phosphate site is built by Lys195, Asp248, Ser258, Arg259, and Asn260. Residue Lys195 is the Proton acceptor of the active site. An NADPH-binding site is contributed by Arg259. 2 residues coordinate NADPH: Val283 and Glu285.

The protein belongs to the NAD-dependent glycerol-3-phosphate dehydrogenase family.

The protein resides in the cytoplasm. The catalysed reaction is sn-glycerol 3-phosphate + NAD(+) = dihydroxyacetone phosphate + NADH + H(+). The enzyme catalyses sn-glycerol 3-phosphate + NADP(+) = dihydroxyacetone phosphate + NADPH + H(+). Its pathway is membrane lipid metabolism; glycerophospholipid metabolism. In terms of biological role, catalyzes the reduction of the glycolytic intermediate dihydroxyacetone phosphate (DHAP) to sn-glycerol 3-phosphate (G3P), the key precursor for phospholipid synthesis. This is Glycerol-3-phosphate dehydrogenase [NAD(P)+] from Mycobacterium avium (strain 104).